Here is a 161-residue protein sequence, read N- to C-terminus: Allophycocyanin beta chain (161 aa).

Asn-71 bears the N4-methylasparagine mark. Cys-81 contacts (2R,3E)-phycocyanobilin.

The protein belongs to the phycobiliprotein family. In terms of assembly, heterodimer of an alpha and a beta chain. In terms of processing, contains one covalently linked phycocyanobilin chromophore.

It is found in the cellular thylakoid membrane. Functionally, light-harvesting photosynthetic bile pigment-protein from the phycobiliprotein complex. Allophycocyanin has a maximum absorption at approximately 650 nanometers. This chain is Allophycocyanin beta chain (apcB), found in Synechocystis sp. (strain ATCC 27184 / PCC 6803 / Kazusa).